A 312-amino-acid chain; its full sequence is uncharacterized protein (312 aa).

10 helical membrane passes run 11 to 31 (IAAI…KIAL), 46 to 66 (IAFA…SIRV), 72 to 92 (ILPL…FGLV), 98 to 118 (EAGI…AYVL), 128 to 148 (GFTV…GVDV), 155 to 171 (GSLL…MYNT), 183 to 203 (TELT…IALV), 221 to 241 (PGFV…TSFL), 254 to 274 (MSAF…VILN), and 277 to 297 (LAWY…GSNI). EamA domains are found at residues 18 to 142 (FIIG…FIFV) and 164 to 297 (LSSA…GSNI).

The protein belongs to the EamA transporter family.

It localises to the cell membrane. This is an uncharacterized protein from Bacillus subtilis (strain 168).